The following is a 257-amino-acid chain: MSPPLELDYIGLSPPVPAAADAAADNDLKGTELRLGLPGSHSPDRSPPAATLDLLPAAKGAKRGFSDEARPLPASAAAAAAAGKGKKAAAGEEDEDAEEEDKKVAAAPQAPAAKAQVVGWPPIRSYRKNTMATNQLKSSKEDAEAKQGQGFLYVKVSMDGAPYLRKVDLKTYKNYKDLSTALEKMFIGFTTGKDGLSESRKDGEYVLTYEDKDGDWMLVGDVPWEMFANSCRRLRIMKGSDAIGLAPRAVDKSKNRN.

2 disordered regions span residues 1–51 (MSPP…PAAT) and 85–119 (GKKA…QVVG). Residues 33–37 (LRLGL) carry the EAR-like (transcriptional repression) motif. A compositionally biased stretch (low complexity) spans 105–118 (AAAPQAPAAKAQVV). One can recognise a PB1 domain in the interval 151 to 239 (FLYVKVSMDG…SCRRLRIMKG (89 aa)).

Belongs to the Aux/IAA family. As to quaternary structure, homodimers and heterodimers. As to expression, highly expressed in etiolated seedlings and flowers. Expressed in roots and green seedlings.

It is found in the nucleus. Functionally, aux/IAA proteins are short-lived transcriptional factors that function as repressors of early auxin response genes at low auxin concentrations. The chain is Auxin-responsive protein IAA17 (IAA17) from Oryza sativa subsp. japonica (Rice).